The chain runs to 339 residues: Anthranilate phosphoribosyltransferase (339 aa).

5-phospho-alpha-D-ribose 1-diphosphate contacts are provided by residues Gly-82, 85-86, 92-95, 110-118, and Ser-122; these read GD, NIST, and KHGNSSISS. Gly-82 is an anthranilate binding site. Ser-94 is a binding site for Mg(2+). Residue Asn-113 coordinates anthranilate. Arg-168 is a binding site for anthranilate. Mg(2+) contacts are provided by Asp-227 and Glu-228.

Belongs to the anthranilate phosphoribosyltransferase family. Homodimer. The cofactor is Mg(2+).

It carries out the reaction N-(5-phospho-beta-D-ribosyl)anthranilate + diphosphate = 5-phospho-alpha-D-ribose 1-diphosphate + anthranilate. The protein operates within amino-acid biosynthesis; L-tryptophan biosynthesis; L-tryptophan from chorismate: step 2/5. Functionally, catalyzes the transfer of the phosphoribosyl group of 5-phosphorylribose-1-pyrophosphate (PRPP) to anthranilate to yield N-(5'-phosphoribosyl)-anthranilate (PRA). The chain is Anthranilate phosphoribosyltransferase from Ruthia magnifica subsp. Calyptogena magnifica.